Consider the following 476-residue polypeptide: Growth/differentiation factor 10 (476 aa).

A signal peptide spans 1–29 (MAPGLARISLRSQLLPLVPLLLLLRGAGC). The propeptide occupies 30 to 366 (GHRVPSWSSL…EKTMQKARRR (337 aa)). N-linked (GlcNAc...) asparagine glycosylation is found at Asn114, Asn152, and Asn277. Disordered stretches follow at residues 268–305 (GDFE…LDER) and 330–358 (PRTG…FDEK). 3 disulfide bridges follow: Cys374–Cys441, Cys403–Cys473, and Cys407–Cys475. Asn467 is a glycosylation site (N-linked (GlcNAc...) asparagine).

The protein belongs to the TGF-beta family. In terms of assembly, homodimer or heterodimer. Can form a non-covalent complex of the mature region and the pro-region. In terms of tissue distribution, costa, costicartilage, femur, calvaria, trachea, aorta and brain. Predominantly in the cerebellum.

The protein resides in the secreted. In terms of biological role, growth factor involved in osteogenesis and adipogenesis. Plays an inhibitory role in the process of osteoblast differentiation via SMAD2/3 pathway. Plays an inhibitory role in the process of adipogenesis. In Rattus norvegicus (Rat), this protein is Growth/differentiation factor 10.